The primary structure comprises 512 residues: Serine/threonine-protein kinase grp (512 aa).

In terms of domain architecture, Protein kinase spans 22 to 279; that stretch reads WTLAQTLGEG…LEKTLDHKWC (258 aa). ATP contacts are provided by residues 28 to 36 and lysine 51; that span reads LGEGAYGEV. Residue aspartate 143 is the Proton acceptor of the active site. The segment at 335-360 is disordered; it reads PTMRSDDDFNVRLGSGRSKEDGGDRQ.

It belongs to the protein kinase superfamily. CAMK Ser/Thr protein kinase family. NIM1 subfamily. Post-translationally, phosphorylated in a MEI-41/ATR dependent manner in response to DNA damage or the presence of unreplicated DNA.

It localises to the nucleus. It carries out the reaction L-seryl-[protein] + ATP = O-phospho-L-seryl-[protein] + ADP + H(+). It catalyses the reaction L-threonyl-[protein] + ATP = O-phospho-L-threonyl-[protein] + ADP + H(+). Functionally, serine/threonine-protein kinase which is required for checkpoint-mediated cell cycle arrest and activation of DNA repair in response to the presence of DNA damage or unreplicated DNA. May also negatively regulate cell cycle progression during unperturbed cell cycles. May phosphorylate the CDC25 phosphatase stg, which promotes its degradation. This results in increased inhibitory tyrosine phosphorylation of Cdk1-cyclin complexes and consequent inhibition of cell cycle progression. The protein is Serine/threonine-protein kinase grp of Drosophila melanogaster (Fruit fly).